The following is a 154-amino-acid chain: Ribosome maturation factor RimP (154 aa).

It belongs to the RimP family.

Its subcellular location is the cytoplasm. Functionally, required for maturation of 30S ribosomal subunits. The sequence is that of Ribosome maturation factor RimP from Deinococcus deserti (strain DSM 17065 / CIP 109153 / LMG 22923 / VCD115).